We begin with the raw amino-acid sequence, 373 residues long: Probable G-protein coupled receptor 173 (373 aa).

Residues 1–26 lie on the Extracellular side of the membrane; the sequence is MANTTGEPEEVSGALSPPSAVAYVKL. N-linked (GlcNAc...) asparagine glycosylation occurs at N3. A helical transmembrane segment spans residues 27-47; it reads VLLGLIMCVSLAGNAILSLLV. The Cytoplasmic segment spans residues 48–59; it reads LKDRALHKAPYY. The helical transmembrane segment at 60–80 threads the bilayer; it reads FLLDLCLADGIRSAVCFPFVL. Residues 81–97 are Extracellular-facing; that stretch reads ASVRHGSSWTFSALSCK. C96 and C174 form a disulfide bridge. Residues 98–118 form a helical membrane-spanning segment; sequence IVAFMAVLFCFHAAFMLFCIS. Topologically, residues 119 to 139 are cytoplasmic; it reads VTRYMAIAHHRFYAKRMTLWT. The helical transmembrane segment at 140 to 160 threads the bilayer; sequence CAAVICMAWTLSVAMAFPPVF. Over 161–188 the chain is Extracellular; sequence DVGTYKFIREEDQCIFEHRYFKANDTLG. A glycan (N-linked (GlcNAc...) asparagine) is linked at N184. A helical transmembrane segment spans residues 189 to 209; sequence FMLMLAVLMAATHAVYGKLLL. Over 210 to 287 the chain is Cytoplasmic; sequence FEYRHRKMKP…VKGEKQLGRM (78 aa). The helical transmembrane segment at 288 to 308 threads the bilayer; that stretch reads FYAITLLFLLLWSPYIVACYW. The Extracellular segment spans residues 309-322; that stretch reads RVFVKACAVPHRYL. Residues 323-343 traverse the membrane as a helical segment; sequence ATAVWMSFAQAAVNPIVCFLL. Over 344-373 the chain is Cytoplasmic; it reads NKDLKKCLRTHAPCWGTGGAPAPREPYCVM.

This sequence belongs to the G-protein coupled receptor 1 family.

Its subcellular location is the cell membrane. Is a receptor for the SMIM20 derived peptides Phoenixin-14 and Phoenixin-20. It mediates the Phoenixin-14 and Phoenixin-20 augmentation of gonadotropin-releasing hormone (GNRH) signaling in the hypothalamus and pituitary gland. In the ovary, it mediates the effects of Phoenixin-14 and Phoenixin-20 induced granulosa cell proliferation during follicular growth. This is Probable G-protein coupled receptor 173 (GPR173) from Bos taurus (Bovine).